A 540-amino-acid polypeptide reads, in one-letter code: Phosphoenolpyruvate carboxykinase (ATP) (540 aa).

R65 serves as a coordination point for substrate. Position 87 is an N6-acetyllysine (K87). Substrate is bound by residues Y207 and K213. Residues K213, H232, and 248–256 (GLSGTGKTT) each bind ATP. Positions 213 and 232 each coordinate Mn(2+). D269 is a binding site for Mn(2+). Residues E297, R333, 449-450 (RI), and T455 contribute to the ATP site. Residue R333 participates in substrate binding. Residue K523 is modified to N6-acetyllysine.

It belongs to the phosphoenolpyruvate carboxykinase (ATP) family. In terms of assembly, monomer. The cofactor is Mn(2+).

The protein resides in the cytoplasm. It catalyses the reaction oxaloacetate + ATP = phosphoenolpyruvate + ADP + CO2. Its pathway is carbohydrate biosynthesis; gluconeogenesis. Involved in the gluconeogenesis. Catalyzes the conversion of oxaloacetate (OAA) to phosphoenolpyruvate (PEP) through direct phosphoryl transfer between the nucleoside triphosphate and OAA. The protein is Phosphoenolpyruvate carboxykinase (ATP) of Escherichia fergusonii (strain ATCC 35469 / DSM 13698 / CCUG 18766 / IAM 14443 / JCM 21226 / LMG 7866 / NBRC 102419 / NCTC 12128 / CDC 0568-73).